A 765-amino-acid polypeptide reads, in one-letter code: Cyanobacterial phytochrome A (765 aa).

Residues 20-510 (IHLSGQIQPH…RKAIVNIVLR (491 aa)) form a chromophore binding domain region. Residues 152-320 (NLRDFCQIIV…VIFAEISARE (169 aa)) enclose the GAF domain. Cysteine 259 contributes to the a tetrapyrrole binding site. A Histidine kinase domain is found at 535 to 748 (VASHDLQEPL…TFYFTIPVGG (214 aa)). Histidine 538 is modified (phosphohistidine; by autocatalysis).

It in the N-terminal section; belongs to the phytochrome family. Contains one covalently linked tetrapyrrole chromophore.

It catalyses the reaction ATP + protein L-histidine = ADP + protein N-phospho-L-histidine.. Functionally, photoreceptor which exists in two forms that are reversibly interconvertible by light: the R form that absorbs maximally in the red region of the spectrum and the FR form that absorbs maximally in the far-red region. This chain is Cyanobacterial phytochrome A (aphA), found in Nostoc sp. (strain PCC 7120 / SAG 25.82 / UTEX 2576).